The chain runs to 72 residues: Translation initiation factor IF-1 (72 aa).

The 72-residue stretch at methionine 1–lysine 72 folds into the S1-like domain.

This sequence belongs to the IF-1 family. As to quaternary structure, component of the 30S ribosomal translation pre-initiation complex which assembles on the 30S ribosome in the order IF-2 and IF-3, IF-1 and N-formylmethionyl-tRNA(fMet); mRNA recruitment can occur at any time during PIC assembly.

The protein resides in the cytoplasm. In terms of biological role, one of the essential components for the initiation of protein synthesis. Stabilizes the binding of IF-2 and IF-3 on the 30S subunit to which N-formylmethionyl-tRNA(fMet) subsequently binds. Helps modulate mRNA selection, yielding the 30S pre-initiation complex (PIC). Upon addition of the 50S ribosomal subunit IF-1, IF-2 and IF-3 are released leaving the mature 70S translation initiation complex. This is Translation initiation factor IF-1 from Chlorobaculum tepidum (strain ATCC 49652 / DSM 12025 / NBRC 103806 / TLS) (Chlorobium tepidum).